The primary structure comprises 265 residues: MICOS complex subunit Mic27 (265 aa).

The N-terminal 27 residues, 1 to 27 (MAAFRMGKLTTIPAGLIYASINVRLAK), are a transit peptide targeting the mitochondrion. Residues 28-110 (EEEPKKQLVR…YVYLKNPPQD (83 aa)) lie on the Mitochondrial intermembrane side of the membrane. A helical membrane pass occupies residues 111–129 (FLPKMGVITASGLAGLLSA). At 130-137 (RKGSRFKK) the chain is on the mitochondrial matrix side. The helical transmembrane segment at 138 to 155 (IAYPLGLATLGATVCYPA) threads the bilayer. Topologically, residues 156–265 (QSVIIAKITG…DDKDMYSTRS (110 aa)) are mitochondrial intermembrane. Disordered regions lie at residues 187–215 (SENESLPEPKEESKEGRSDEIHASLPDLK) and 229–265 (VIKSESTSGTTQFIPDPKLMDHGQSHPDDKDMYSTRS). Ser-204 carries the phosphoserine modification. Over residues 229–241 (VIKSESTSGTTQF) the composition is skewed to polar residues. A compositionally biased stretch (basic and acidic residues) spans 246–265 (KLMDHGQSHPDDKDMYSTRS).

This sequence belongs to the apolipoprotein O/MICOS complex subunit Mic27 family. In terms of assembly, component of the mitochondrial contact site and cristae organizing system (MICOS) complex, composed of at least MICOS10/MIC10, CHCHD3/MIC19, CHCHD6/MIC25, APOOL/MIC27, IMMT/MIC60, APOO/MIC23/MIC26 and MICOS13/MIC13. This complex was also known under the names MINOS or MitOS complex. The MICOS complex associates with mitochondrial outer membrane proteins SAMM50, MTX1 and MTX2 (together described as components of the mitochondrial outer membrane sorting assembly machinery (SAM) complex) and DNAJC11, mitochondrial inner membrane protein TMEM11 and with HSPA9. The MICOS and SAM complexes together with DNAJC11 are part of a large protein complex spanning both membranes termed the mitochondrial intermembrane space bridging (MIB) complex. Interacts with MICOS10/MIC10, IMMT/MIC60 and APOO/MIC23/MIC26.

Its subcellular location is the mitochondrion inner membrane. It localises to the mitochondrion. Functionally, component of the MICOS complex, a large protein complex of the mitochondrial inner membrane that plays crucial roles in the maintenance of crista junctions, inner membrane architecture, and formation of contact sites to the outer membrane. Specifically binds to cardiolipin (in vitro) but not to the precursor lipid phosphatidylglycerol. Plays a crucial role in crista junction formation and mitochondrial function. This Mus musculus (Mouse) protein is MICOS complex subunit Mic27 (Apool).